The primary structure comprises 274 residues: Protein RecA (274 aa).

43–50 (GPESSGKT) contacts ATP.

This sequence belongs to the RecA family.

Its subcellular location is the cytoplasm. Functionally, can catalyze the hydrolysis of ATP in the presence of single-stranded DNA, the ATP-dependent uptake of single-stranded DNA by duplex DNA, and the ATP-dependent hybridization of homologous single-stranded DNAs. It interacts with LexA causing its activation and leading to its autocatalytic cleavage. The protein is Protein RecA of Neisseria flavescens.